We begin with the raw amino-acid sequence, 195 residues long: ATP-dependent Clp protease proteolytic subunit (195 aa).

Serine 98 serves as the catalytic Nucleophile. Histidine 123 is an active-site residue.

This sequence belongs to the peptidase S14 family. Fourteen ClpP subunits assemble into 2 heptameric rings which stack back to back to give a disk-like structure with a central cavity, resembling the structure of eukaryotic proteasomes.

The protein localises to the cytoplasm. It carries out the reaction Hydrolysis of proteins to small peptides in the presence of ATP and magnesium. alpha-casein is the usual test substrate. In the absence of ATP, only oligopeptides shorter than five residues are hydrolyzed (such as succinyl-Leu-Tyr-|-NHMec, and Leu-Tyr-Leu-|-Tyr-Trp, in which cleavage of the -Tyr-|-Leu- and -Tyr-|-Trp bonds also occurs).. In terms of biological role, cleaves peptides in various proteins in a process that requires ATP hydrolysis. Has a chymotrypsin-like activity. Plays a major role in the degradation of misfolded proteins. The protein is ATP-dependent Clp protease proteolytic subunit of Helicobacter pylori (strain J99 / ATCC 700824) (Campylobacter pylori J99).